The following is a 149-amino-acid chain: D-aminoacyl-tRNA deacylase (149 aa).

A Gly-cisPro motif, important for rejection of L-amino acids motif is present at residues 137-138 (GP).

The protein belongs to the DTD family. As to quaternary structure, homodimer.

It is found in the cytoplasm. It carries out the reaction glycyl-tRNA(Ala) + H2O = tRNA(Ala) + glycine + H(+). The catalysed reaction is a D-aminoacyl-tRNA + H2O = a tRNA + a D-alpha-amino acid + H(+). Functionally, an aminoacyl-tRNA editing enzyme that deacylates mischarged D-aminoacyl-tRNAs. Also deacylates mischarged glycyl-tRNA(Ala), protecting cells against glycine mischarging by AlaRS. Acts via tRNA-based rather than protein-based catalysis; rejects L-amino acids rather than detecting D-amino acids in the active site. By recycling D-aminoacyl-tRNA to D-amino acids and free tRNA molecules, this enzyme counteracts the toxicity associated with the formation of D-aminoacyl-tRNA entities in vivo and helps enforce protein L-homochirality. The polypeptide is D-aminoacyl-tRNA deacylase (Clostridium botulinum (strain 657 / Type Ba4)).